A 635-amino-acid chain; its full sequence is Threonine--tRNA ligase (635 aa).

Residues 1–61 form the TGS domain; the sequence is MINISFPDGS…DNDCKLRILT (61 aa). The segment at 242–533 is catalytic; sequence DHRKLGRELD…LIEEYAGRFP (292 aa). Zn(2+) contacts are provided by Cys333, His384, and His510.

Belongs to the class-II aminoacyl-tRNA synthetase family. In terms of assembly, homodimer. It depends on Zn(2+) as a cofactor.

The protein localises to the cytoplasm. The enzyme catalyses tRNA(Thr) + L-threonine + ATP = L-threonyl-tRNA(Thr) + AMP + diphosphate + H(+). Catalyzes the attachment of threonine to tRNA(Thr) in a two-step reaction: L-threonine is first activated by ATP to form Thr-AMP and then transferred to the acceptor end of tRNA(Thr). Also edits incorrectly charged L-seryl-tRNA(Thr). The chain is Threonine--tRNA ligase from Rickettsia africae (strain ESF-5).